A 188-amino-acid polypeptide reads, in one-letter code: Peptidyl-tRNA hydrolase (188 aa).

Residue Tyr16 participates in tRNA binding. Residue His21 is the Proton acceptor of the active site. The tRNA site is built by Phe66, Asn68, and Asn114.

The protein belongs to the PTH family. In terms of assembly, monomer.

It localises to the cytoplasm. It catalyses the reaction an N-acyl-L-alpha-aminoacyl-tRNA + H2O = an N-acyl-L-amino acid + a tRNA + H(+). Functionally, hydrolyzes ribosome-free peptidyl-tRNAs (with 1 or more amino acids incorporated), which drop off the ribosome during protein synthesis, or as a result of ribosome stalling. In terms of biological role, catalyzes the release of premature peptidyl moieties from peptidyl-tRNA molecules trapped in stalled 50S ribosomal subunits, and thus maintains levels of free tRNAs and 50S ribosomes. The polypeptide is Peptidyl-tRNA hydrolase (Geobacter sp. (strain M21)).